A 462-amino-acid polypeptide reads, in one-letter code: Ribosomal oxygenase 2 (462 aa).

Residues 1-24 (MPKKARPAGDGKEQGPAPKQVKVE) form a disordered region. The JmjC domain occupies 139 to 271 (QPQRFKDELW…SSWGDFLLDT (133 aa)). The Fe cation site is built by His-179, Asp-181, and His-240. Phosphoserine is present on Ser-308.

Belongs to the ROX family. MINA53 subfamily. Fe(2+) is required as a cofactor.

The protein localises to the nucleus. It is found in the nucleolus. The enzyme catalyses L-histidyl-[ribosomal protein uL15] + 2-oxoglutarate + O2 = (3S)-3-hydroxy-L-histidyl-[ribosomal protein uL15] + succinate + CO2. The catalysed reaction is L-histidyl-[protein] + 2-oxoglutarate + O2 = (3S)-3-hydroxy-L-histidyl-[protein] + succinate + CO2. Its function is as follows. Oxygenase that can act as both a histone lysine demethylase and a ribosomal histidine hydroxylase. Is involved in the demethylation of trimethylated 'Lys-9' on histone H3 (H3K9me3), leading to an increase in ribosomal RNA expression. Also catalyzes the hydroxylation of 60S ribosomal protein L27a on 'His-39'. May play an important role in cell growth and survival. May be involved in ribosome biogenesis, most likely during the assembly process of pre-ribosomal particles. In Bos taurus (Bovine), this protein is Ribosomal oxygenase 2 (RIOX2).